The primary structure comprises 229 residues: Ribonuclease 3 (229 aa).

The RNase III domain maps to 4 to 133 (WEELQESVGF…FIGALYLDNG (130 aa)). A Mg(2+)-binding site is contributed by Glu46. Asp50 is an active-site residue. Asp119 and Glu122 together coordinate Mg(2+). Glu122 is an active-site residue. A DRBM domain is found at 159-228 (DYKTQLQEIV…AQFAINKLIH (70 aa)).

Belongs to the ribonuclease III family. As to quaternary structure, homodimer. The cofactor is Mg(2+).

It localises to the cytoplasm. It catalyses the reaction Endonucleolytic cleavage to 5'-phosphomonoester.. Its function is as follows. Digests double-stranded RNA. Involved in the processing of primary rRNA transcript to yield the immediate precursors to the large and small rRNAs (23S and 16S). Processes some mRNAs, and tRNAs when they are encoded in the rRNA operon. Processes pre-crRNA and tracrRNA of type II CRISPR loci if present in the organism. The protein is Ribonuclease 3 of Listeria monocytogenes serovar 1/2a (strain ATCC BAA-679 / EGD-e).